Consider the following 475-residue polypeptide: Cytosolic non-specific dipeptidase (475 aa).

Lys9 carries the post-translational modification N6-acetyllysine. Ser58 is subject to Phosphoserine. Residue His99 coordinates Mn(2+). Residue Asp101 is part of the active site. Residue Asp132 participates in Mn(2+) binding. Catalysis depends on Glu166, which acts as the Proton acceptor. Substrate contacts are provided by residues 166–167 (EE), Asp195, His228, Thr330, Arg343, Ser417, and His445. 2 residues coordinate Mn(2+): Glu167 and Asp195. His445 serves as a coordination point for Mn(2+).

It belongs to the peptidase M20A family. Homodimer. Requires Mn(2+) as cofactor.

Its subcellular location is the cytoplasm. It catalyses the reaction Hydrolysis of dipeptides, preferentially hydrophobic dipeptides including prolyl amino acids.. The catalysed reaction is L-threonyl-L-threonine + H2O = 2 L-threonine. The enzyme catalyses L-threonyl-L-serine + H2O = L-threonine + L-serine. It carries out the reaction L-seryl-L-threonine + H2O = L-threonine + L-serine. It catalyses the reaction L-cysteinylglycine + H2O = L-cysteine + glycine. The catalysed reaction is L-alanyl-L-cysteine + H2O = L-cysteine + L-alanine. The enzyme catalyses (S)-lactate + L-phenylalanine = N-[(S)-lactoyl]-L-phenylalanine + H2O. Functionally, catalyzes the peptide bond hydrolysis in dipeptides, displaying a non-redundant activity toward threonyl dipeptides. Mediates threonyl dipeptide catabolism in a tissue-specific way. Has high dipeptidase activity toward cysteinylglycine, an intermediate metabolite in glutathione metabolism. Metabolizes N-lactoyl-amino acids, both through hydrolysis to form lactic acid and amino acids, as well as through their formation by reverse proteolysis. Plays a role in the regulation of cell cycle arrest and apoptosis. This is Cytosolic non-specific dipeptidase (CNDP2) from Bos taurus (Bovine).